Consider the following 89-residue polypeptide: Small ribosomal subunit protein uS15 (89 aa).

The protein belongs to the universal ribosomal protein uS15 family. As to quaternary structure, part of the 30S ribosomal subunit. Forms a bridge to the 50S subunit in the 70S ribosome, contacting the 23S rRNA.

One of the primary rRNA binding proteins, it binds directly to 16S rRNA where it helps nucleate assembly of the platform of the 30S subunit by binding and bridging several RNA helices of the 16S rRNA. Its function is as follows. Forms an intersubunit bridge (bridge B4) with the 23S rRNA of the 50S subunit in the ribosome. The chain is Small ribosomal subunit protein uS15 from Lactobacillus johnsonii (strain CNCM I-12250 / La1 / NCC 533).